A 166-amino-acid chain; its full sequence is Large ribosomal subunit protein uL10 (166 aa).

The protein belongs to the universal ribosomal protein uL10 family. As to quaternary structure, part of the ribosomal stalk of the 50S ribosomal subunit. The N-terminus interacts with L11 and the large rRNA to form the base of the stalk. The C-terminus forms an elongated spine to which L12 dimers bind in a sequential fashion forming a multimeric L10(L12)X complex.

Its function is as follows. Forms part of the ribosomal stalk, playing a central role in the interaction of the ribosome with GTP-bound translation factors. This is Large ribosomal subunit protein uL10 from Bacillus cereus (strain G9842).